A 314-amino-acid polypeptide reads, in one-letter code: A-kinase anchor protein 7 isoform gamma (314 aa).

Residues 1–46 (MPFAAVDIQDDCGSPDVPQANPKRSKEEEEDRGDKNDHVKKRKKAK) form a disordered region. The segment covering 24–37 (RSKEEEEDRGDKND) has biased composition (basic and acidic residues). Residues threonine 95 and 185–187 (HLT) contribute to the AMP site. CMP-binding positions include threonine 95 and 185–187 (HLT). The interval 260 to 314 (AELVRLSKRLVENAVLKAVQQYLEETQNKKQPGEGNSTKAEEGDRNGDGSDNNRK) is PKA-RII-alpha subunit binding domain. Residues 261–285 (ELVRLSKRLVENAVLKAVQQYLEET) form an RI-alpha-binding region. Positions 262 to 275 (LVRLSKRLVENAVL) are RII-binding. The disordered stretch occupies residues 281-314 (YLEETQNKKQPGEGNSTKAEEGDRNGDGSDNNRK). Over residues 298–314 (KAEEGDRNGDGSDNNRK) the composition is skewed to basic and acidic residues.

Binds cAMP-dependent protein kinase (PKA). Interacts with PRKCA; only the cytoplasmic form is capable of interacting with PRKCA. As to expression, expressed in oocytes.

It localises to the nucleus. The protein localises to the cytoplasm. Functionally, probably targets cAMP-dependent protein kinase (PKA) to the cellular membrane or cytoskeletal structures. The membrane-associated form reduces epithelial sodium channel (ENaC) activity, whereas the free cytoplasmic form may negatively regulate ENaC channel feedback inhibition by intracellular sodium. This chain is A-kinase anchor protein 7 isoform gamma, found in Mus musculus (Mouse).